Here is a 160-residue protein sequence, read N- to C-terminus: Protein P5 (160 aa).

The chain crosses the membrane as a helical span at residues 7-23 (FLATAAALGVAMFPTQI).

It localises to the virion membrane. The polypeptide is Protein P5 (V) (Pseudoalteromonas espejiana (Bacteriophage PM2)).